A 444-amino-acid polypeptide reads, in one-letter code: ATPase PAAT (444 aa).

4 positions are modified to phosphoserine: Ser-177, Ser-182, Ser-254, and Ser-302. The disordered stretch occupies residues 424-444 (PSPGMPLRHYDSRERLSNGER). Residues 431–444 (RHYDSRERLSNGER) show a composition bias toward basic and acidic residues.

In terms of assembly, homodimer. Interacts with ABCB7, ABCB8/MITOSUR and ABCB10.

The protein localises to the cytoplasm. The protein resides in the mitochondrion. It carries out the reaction ATP + H2O = ADP + phosphate + H(+). Its function is as follows. ATPase that regulates mitochondrial ABC transporters ABCB7, ABCB8/MITOSUR and ABCB10. Regulates mitochondrial ferric concentration and heme biosynthesis and plays a role in the maintenance of mitochondrial homeostasis and cell survival. This chain is ATPase PAAT, found in Rattus norvegicus (Rat).